The sequence spans 395 residues: Scyllo-inosose 3-dehydrogenase (395 aa).

C66 is a Zn(2+) binding site. Residues S68 and H71 each act as charge relay system in the active site. Zn(2+) is bound by residues H95, E96, C131, C134, C137, C145, and E193. 3 residues coordinate NAD(+): I223, E243, and R248.

Belongs to the zinc-containing alcohol dehydrogenase family. As to quaternary structure, homodimer. Zn(2+) is required as a cofactor.

The enzyme catalyses scyllo-inosose + NAD(+) = 3-dehydro-scyllo-inosose + NADH + H(+). It participates in polyol metabolism; myo-inositol metabolism. Its function is as follows. Catalyzes the NAD(+)-dependent oxidation of scyllo-inosose (2-keto-myo-inositol) to 3-dehydro-scyllo-inosose (diketo-inositol), and thus probably functions in a myo-inositol degradation pathway together with IolG, IolN and IolO. Has no activity on myo-inositol, D-chiro-inositol and 1-keto-D-chiro-inositol. The polypeptide is Scyllo-inosose 3-dehydrogenase (Thermotoga maritima (strain ATCC 43589 / DSM 3109 / JCM 10099 / NBRC 100826 / MSB8)).